Consider the following 456-residue polypeptide: MTKKVYVKTFGCQMNEYDSDKMVDVLGAAEGLVKTDTPEDADVILFNTCSVREKAQEKVFSDLGRVRELKEANPNLLIGVGGCVASQEGASIVARAPYVDLVFGPQTLHRLPQMIDQRRASGRPQVDITFPEIEKFDHLPPARIDGPSAFVSIMEGCSKYCSYCVVPYTRGEEVSRPLDDVLTEIAGLADQGVREVTLLGQNVNAYRGAMTLGATEIADFATLIEYVADIPGIERIRYTTSHPKEFTQRLIDTYAKVPKLVSHLHLPVQHGSDRILMAMKRGYTVLEYKSVIRKLRAIRPDLSLSTDMIVGFPGETEEDFDKMMQLVHDMSYDTSFSFIYSPRPGTPAANLQDDTPREVKLRRLQHLQATIEENVQRISQAMVGKVERILVERPARKDPNELAGRTENNRVVNFPAPVETHARLIGQMIDVKIVHAYPHSLRGELVMVHDTAPATH.

Positions 3 to 120 (KKVYVKTFGC…LPQMIDQRRA (118 aa)) constitute an MTTase N-terminal domain. Residues Cys12, Cys49, Cys83, Cys157, Cys161, and Cys164 each coordinate [4Fe-4S] cluster. The 235-residue stretch at 143–377 (RIDGPSAFVS…QATIEENVQR (235 aa)) folds into the Radical SAM core domain. The TRAM domain maps to 380–447 (QAMVGKVERI…PHSLRGELVM (68 aa)).

It belongs to the methylthiotransferase family. MiaB subfamily. As to quaternary structure, monomer. It depends on [4Fe-4S] cluster as a cofactor.

Its subcellular location is the cytoplasm. It catalyses the reaction N(6)-dimethylallyladenosine(37) in tRNA + (sulfur carrier)-SH + AH2 + 2 S-adenosyl-L-methionine = 2-methylsulfanyl-N(6)-dimethylallyladenosine(37) in tRNA + (sulfur carrier)-H + 5'-deoxyadenosine + L-methionine + A + S-adenosyl-L-homocysteine + 2 H(+). Functionally, catalyzes the methylthiolation of N6-(dimethylallyl)adenosine (i(6)A), leading to the formation of 2-methylthio-N6-(dimethylallyl)adenosine (ms(2)i(6)A) at position 37 in tRNAs that read codons beginning with uridine. The chain is tRNA-2-methylthio-N(6)-dimethylallyladenosine synthase from Paraburkholderia phymatum (strain DSM 17167 / CIP 108236 / LMG 21445 / STM815) (Burkholderia phymatum).